The chain runs to 347 residues: Melanoma-associated antigen B10 (347 aa).

Residues 1-18 (MPRGQKSKLRAREKRRQA) show a composition bias toward basic residues. Disordered regions lie at residues 1 to 20 (MPRGQKSKLRAREKRRQARG) and 56 to 92 (GASNNPHGLREAQSTSTSATAASHTRHPEGVNDQMEE). The segment covering 67 to 78 (AQSTSTSATAAS) has biased composition (low complexity). Residues 81-92 (RHPEGVNDQMEE) show a composition bias toward basic and acidic residues. The region spanning 111–310 (VDEKVIILVH…SEFSNWYTEA (200 aa)) is the MAGE domain. Residues 328-347 (VSATAGARSKVKSSKSSQLQ) form a disordered region.

The sequence is that of Melanoma-associated antigen B10 (MAGEB10) from Homo sapiens (Human).